The chain runs to 334 residues: Holliday junction branch migration complex subunit RuvB (334 aa).

A large ATPase domain (RuvB-L) region spans residues 4–184; it reads ADRLISAAVI…FGIVQRLEFY (181 aa). ATP-binding positions include I23, R24, G65, K68, T69, T70, 131-133, R174, Y184, and R221; that span reads EDY. Position 69 (T69) interacts with Mg(2+). Residues 185 to 255 are small ATPAse domain (RuvB-S); it reads PVADLEHIVS…VAMKALDMLN (71 aa). The head domain (RuvB-H) stretch occupies residues 258 to 334; the sequence is AEGFDFMDRK…YKHFGITREE (77 aa). R294, R313, and R318 together coordinate DNA.

It belongs to the RuvB family. Homohexamer. Forms an RuvA(8)-RuvB(12)-Holliday junction (HJ) complex. HJ DNA is sandwiched between 2 RuvA tetramers; dsDNA enters through RuvA and exits via RuvB. An RuvB hexamer assembles on each DNA strand where it exits the tetramer. Each RuvB hexamer is contacted by two RuvA subunits (via domain III) on 2 adjacent RuvB subunits; this complex drives branch migration. In the full resolvosome a probable DNA-RuvA(4)-RuvB(12)-RuvC(2) complex forms which resolves the HJ.

It localises to the cytoplasm. It catalyses the reaction ATP + H2O = ADP + phosphate + H(+). The RuvA-RuvB-RuvC complex processes Holliday junction (HJ) DNA during genetic recombination and DNA repair, while the RuvA-RuvB complex plays an important role in the rescue of blocked DNA replication forks via replication fork reversal (RFR). RuvA specifically binds to HJ cruciform DNA, conferring on it an open structure. The RuvB hexamer acts as an ATP-dependent pump, pulling dsDNA into and through the RuvAB complex. RuvB forms 2 homohexamers on either side of HJ DNA bound by 1 or 2 RuvA tetramers; 4 subunits per hexamer contact DNA at a time. Coordinated motions by a converter formed by DNA-disengaged RuvB subunits stimulates ATP hydrolysis and nucleotide exchange. Immobilization of the converter enables RuvB to convert the ATP-contained energy into a lever motion, pulling 2 nucleotides of DNA out of the RuvA tetramer per ATP hydrolyzed, thus driving DNA branch migration. The RuvB motors rotate together with the DNA substrate, which together with the progressing nucleotide cycle form the mechanistic basis for DNA recombination by continuous HJ branch migration. Branch migration allows RuvC to scan DNA until it finds its consensus sequence, where it cleaves and resolves cruciform DNA. The polypeptide is Holliday junction branch migration complex subunit RuvB (Yersinia pestis bv. Antiqua (strain Angola)).